Reading from the N-terminus, the 651-residue chain is UvrABC system protein C (651 aa).

Positions Glu20–Ile97 constitute a GIY-YIG domain. The UVR domain occupies Lys207 to Val242.

Belongs to the UvrC family. In terms of assembly, interacts with UvrB in an incision complex.

The protein localises to the cytoplasm. Its function is as follows. The UvrABC repair system catalyzes the recognition and processing of DNA lesions. UvrC both incises the 5' and 3' sides of the lesion. The N-terminal half is responsible for the 3' incision and the C-terminal half is responsible for the 5' incision. This is UvrABC system protein C from Rickettsia akari (strain Hartford).